A 1082-amino-acid polypeptide reads, in one-letter code: Protein SPT23 (1082 aa).

Disordered regions lie at residues 315 to 346, 376 to 417, and 457 to 476; these read NASNTTTPTSTSNAQVSPMTNDTRSFSSPQSD, NNNN…FSDI, and ASARHTGKRQRSVNEPFMST. A compositionally biased stretch (low complexity) spans 316-328; it reads ASNTTTPTSTSNA. Positions 329–346 are enriched in polar residues; it reads QVSPMTNDTRSFSSPQSD. Low complexity-rich tracts occupy residues 376 to 391 and 399 to 416; these read NNNNDNDNKNNIKTNT and HFPSPNSSSEDSNHSFSD. Phosphoserine is present on Ser468. The 78-residue stretch at 508–585 folds into the IPT/TIG domain; that stretch reads PSIQRVIPAQ…DPSETSMRNN (78 aa). ANK repeat units lie at residues 709–738 and 742–771; these read RGRTLLHLAAFNNWYSLVSLLIKYGSHLND and FGFTPLHMACINGDLRIIRLLLECNVNIMK.

In terms of biological role, dosage-dependent suppressor of Ty-induced promoter mutations. May exert its suppression effect through protein-protein interactions since does not present any of the motifs generally found in transcriptional activators or DNA binding proteins. The sequence is that of Protein SPT23 (SPT23) from Saccharomyces cerevisiae (strain ATCC 204508 / S288c) (Baker's yeast).